A 1031-amino-acid chain; its full sequence is Sister chromatid cohesion 1 protein 4 (1031 aa).

Positions 461 to 481 (TPDKEDPGTCNDDAGNNNITG) are disordered. Positions 545–552 (TKRLRSAP) match the Nuclear localization signal motif. Disordered stretches follow at residues 661-703 (VEEN…EELK), 742-772 (EKLDRVEDLQVEESHENHDGEGGQDVCADPN), and 803-835 (ELPHEDEKTDASAEVSELGRDDQTPCDNTVGST). 2 stretches are compositionally biased toward basic and acidic residues: residues 742-762 (EKLDRVEDLQVEESHENHDGE) and 803-825 (ELPHEDEKTDASAEVSELGRDDQ).

Belongs to the rad21 family. As to quaternary structure, component of the cohesin complex. Expressed in tissues containing dividing cells such as seedlings, flower buds, flowers and inflorescence meristem tissue.

The protein resides in the nucleus. It localises to the chromosome. It is found in the centromere. Involved in sister chromatid and centromere cohesion during mitosis. The protein is Sister chromatid cohesion 1 protein 4 (SYN4) of Arabidopsis thaliana (Mouse-ear cress).